The following is a 185-amino-acid chain: Inner membrane lipoprotein DcrB (185 aa).

The signal sequence occupies residues 1–19 (MRNLVKYVGIGLLVMGLAA). C20 is lipidated: N-palmitoyl cysteine. C20 carries the S-diacylglycerol cysteine lipid modification.

This sequence belongs to the DcrB family.

The protein localises to the cell membrane. Plays a role in cell envelope biogenesis, maintenance of cell envelope integrity and membrane homeostasis. Essential for lipoprotein maturation under conditions where membrane fluidity may be altered. This chain is Inner membrane lipoprotein DcrB, found in Shigella flexneri.